The primary structure comprises 364 residues: Phosphoserine aminotransferase (364 aa).

L-glutamate is bound at residue Arg-41. Residues 75 to 76 (AS), Trp-100, Thr-155, Asp-175, and Gln-198 each bind pyridoxal 5'-phosphate. Position 199 is an N6-(pyridoxal phosphate)lysine (Lys-199). Position 239–240 (239–240 (NT)) interacts with pyridoxal 5'-phosphate.

This sequence belongs to the class-V pyridoxal-phosphate-dependent aminotransferase family. SerC subfamily. Homodimer. Pyridoxal 5'-phosphate serves as cofactor.

Its subcellular location is the cytoplasm. The enzyme catalyses O-phospho-L-serine + 2-oxoglutarate = 3-phosphooxypyruvate + L-glutamate. It catalyses the reaction 4-(phosphooxy)-L-threonine + 2-oxoglutarate = (R)-3-hydroxy-2-oxo-4-phosphooxybutanoate + L-glutamate. It participates in amino-acid biosynthesis; L-serine biosynthesis; L-serine from 3-phospho-D-glycerate: step 2/3. Functionally, catalyzes the reversible conversion of 3-phosphohydroxypyruvate to phosphoserine and of 3-hydroxy-2-oxo-4-phosphonooxybutanoate to phosphohydroxythreonine. The polypeptide is Phosphoserine aminotransferase (Streptococcus thermophilus (strain CNRZ 1066)).